A 218-amino-acid chain; its full sequence is Replication protein RepB (218 aa).

A disordered region spans residues Met1–Arg26. Basic residues predominate over residues Lys16–Arg26.

It belongs to the Gram-positive plasmids replication protein type 2 family.

Functionally, is essential for plasmid replication. Nicks the positive strand at the plus origin of replication. This Lactiplantibacillus plantarum (Lactobacillus plantarum) protein is Replication protein RepB (repB).